Here is a 278-residue protein sequence, read N- to C-terminus: Thioredoxin-related transmembrane protein 1 (278 aa).

Residues 1–26 (MAPSGSLRIPVAVLLLLLWGAPWAHG) form the signal peptide. Residues 27-132 (KRSDVRIITD…FINFISDKEW (106 aa)) enclose the Thioredoxin domain. Over 27–180 (KRSDVRIITD…EDLGLPIWGS (154 aa)) the chain is Extracellular. Catalysis depends on nucleophile residues Cys-56 and Cys-59. The cysteines at positions 56 and 59 are disulfide-linked. A helical membrane pass occupies residues 181-203 (YTVFALATLLSGLLLGLFMIFVA). Over 204-278 (DCLCPSKRRR…VGPSLATDKS (75 aa)) the chain is Cytoplasmic. S-palmitoyl cysteine attachment occurs at residues Cys-205 and Cys-207. Residues 213 to 278 (RPQPYPSRKL…VGPSLATDKS (66 aa)) are disordered. Phosphoserine occurs at positions 226, 245, 268, 272, and 278. A compositionally biased stretch (acidic residues) spans 235–250 (EEQEADVEDVSEEESE).

In terms of assembly, interacts with ATP2A2. In terms of processing, palmitoylated; palmitoylation is required for localization to mitochondria-associated endoplasmic reticulum membrane (MAM).

It is found in the endoplasmic reticulum membrane. The protein localises to the mitochondrion membrane. Its subcellular location is the secreted. The enzyme catalyses Catalyzes the rearrangement of -S-S- bonds in proteins.. In terms of biological role, thiredoxin domain-containing protein that participates in various redox reactions through the reversible oxidation of its active center dithiol to a disulfide and catalyze dithiol-disulfide exchange reactions. Acts as a key inhibitor of the alternative triglyceride biosynthesis pathway by inhibiting the activity of TMEM68/DIESL at the endoplasmic reticulum, thereby restricting accumulation of triacylglycerol. The alternative triglyceride biosynthesis pathway mediates formation of triacylglycerol from diacylglycerol and membrane phospholipids. Acts as a protein disulfide isomerase by catalyzing formation or reduction of disulfide bonds. Specifically mediates formation of disulfide bonds of transmembrane proteins at the endoplasmic reticulum membrane. Involved in endoplasmic reticulum-associated degradation (ERAD) via its protein disulfide isomerase activity by acting on folding-defective polypeptides at the endoplasmic reticulum membrane. Acts as a negative regulator of platelet aggregation following secretion in the extracellular space. Acts as a regulator of endoplasmic reticulum-mitochondria contact sites via its ability to regulate redox signals. Regulates endoplasmic reticulum-mitochondria Ca(2+) flux. The chain is Thioredoxin-related transmembrane protein 1 (TMX1) from Bos taurus (Bovine).